A 336-amino-acid chain; its full sequence is tRNA N6-adenosine threonylcarbamoyltransferase (336 aa).

Fe cation is bound by residues His111 and His115. Residues 134 to 138 (VVSGG), Asp167, Gly180, Asp184, and Asn272 contribute to the substrate site. Position 300 (Asp300) interacts with Fe cation.

This sequence belongs to the KAE1 / TsaD family. The cofactor is Fe(2+).

Its subcellular location is the cytoplasm. The enzyme catalyses L-threonylcarbamoyladenylate + adenosine(37) in tRNA = N(6)-L-threonylcarbamoyladenosine(37) in tRNA + AMP + H(+). Functionally, required for the formation of a threonylcarbamoyl group on adenosine at position 37 (t(6)A37) in tRNAs that read codons beginning with adenine. Is involved in the transfer of the threonylcarbamoyl moiety of threonylcarbamoyl-AMP (TC-AMP) to the N6 group of A37, together with TsaE and TsaB. TsaD likely plays a direct catalytic role in this reaction. This is tRNA N6-adenosine threonylcarbamoyltransferase from Caldicellulosiruptor bescii (strain ATCC BAA-1888 / DSM 6725 / KCTC 15123 / Z-1320) (Anaerocellum thermophilum).